The following is a 513-amino-acid chain: ATP synthase subunit alpha (513 aa).

169-176 is an ATP binding site; sequence GDRQIGKT.

It belongs to the ATPase alpha/beta chains family. F-type ATPases have 2 components, CF(1) - the catalytic core - and CF(0) - the membrane proton channel. CF(1) has five subunits: alpha(3), beta(3), gamma(1), delta(1), epsilon(1). CF(0) has three main subunits: a(1), b(2) and c(9-12). The alpha and beta chains form an alternating ring which encloses part of the gamma chain. CF(1) is attached to CF(0) by a central stalk formed by the gamma and epsilon chains, while a peripheral stalk is formed by the delta and b chains.

The protein localises to the cell inner membrane. The enzyme catalyses ATP + H2O + 4 H(+)(in) = ADP + phosphate + 5 H(+)(out). Its function is as follows. Produces ATP from ADP in the presence of a proton gradient across the membrane. The alpha chain is a regulatory subunit. The chain is ATP synthase subunit alpha from Shewanella woodyi (strain ATCC 51908 / MS32).